The sequence spans 340 residues: Phosphatidylglycerol--prolipoprotein diacylglyceryl transferase (340 aa).

Transmembrane regions (helical) follow at residues 19 to 39 (IPLRGYAFCIIIGVFVAVWLG), 54 to 74 (ADIAVWAVPFGLVGGRLYHVI), 93 to 113 (IWEGGLGIWGAIALGAVGAWI), and 119 to 139 (GIPLPAWADAVAPGIAFAQAF). A 1,2-diacyl-sn-glycero-3-phospho-(1'-sn-glycerol) is bound at residue R141. The next 3 helical transmembrane spans lie at 176 to 196 (HPTFLYESLWCVGVGFLVIWA), 202 to 221 (LGHGRAFALYVAAYCVGRAW), and 238 to 258 (LNDWTAIAVFLLAVLYIVLSS). Residues 266–340 (EIVEPGASDT…ESAAESAKKV (75 aa)) form a disordered region. The segment covering 284–294 (DLGKDEDKATT) has biased composition (basic and acidic residues). Over residues 295–307 (DKATATDTSTTTD) the composition is skewed to low complexity. Residues 326-340 (PSEKTESAAESAKKV) are compositionally biased toward basic and acidic residues.

Belongs to the Lgt family.

It is found in the cell membrane. The enzyme catalyses L-cysteinyl-[prolipoprotein] + a 1,2-diacyl-sn-glycero-3-phospho-(1'-sn-glycerol) = an S-1,2-diacyl-sn-glyceryl-L-cysteinyl-[prolipoprotein] + sn-glycerol 1-phosphate + H(+). It functions in the pathway protein modification; lipoprotein biosynthesis (diacylglyceryl transfer). Its function is as follows. Catalyzes the transfer of the diacylglyceryl group from phosphatidylglycerol to the sulfhydryl group of the N-terminal cysteine of a prolipoprotein, the first step in the formation of mature lipoproteins. The polypeptide is Phosphatidylglycerol--prolipoprotein diacylglyceryl transferase (Streptomyces avermitilis (strain ATCC 31267 / DSM 46492 / JCM 5070 / NBRC 14893 / NCIMB 12804 / NRRL 8165 / MA-4680)).